Reading from the N-terminus, the 82-residue chain is uncharacterized protein (82 aa).

Helical transmembrane passes span 8–28 (LLSA…LPAP) and 50–70 (LYTV…YLVL).

Its subcellular location is the cell membrane. This is an uncharacterized protein from Klebsiella pneumoniae.